Here is a 353-residue protein sequence, read N- to C-terminus: Polyprenal reductase 2 (353 aa).

6 helical membrane passes run 11-31 (PLLC…ALPI), 78-98 (FMHF…AIWF), 175-195 (MHIV…LSLA), 234-254 (PLLK…WGSL), 291-308 (YLAE…SGAE), and 313-335 (WFLF…NWYL).

The protein belongs to the steroid 5-alpha reductase family. Polyprenal reductase subfamily.

The protein localises to the cell membrane. The enzyme catalyses a di-trans,poly-cis-dolichal + NADP(+) = a di-trans,poly-cis-polyprenal + NADPH + H(+). It participates in protein modification; protein glycosylation. Its function is as follows. Plays a key role in early steps of protein N-linked glycosylation by being involved in the conversion of polyprenol into dolichol. Acts as a polyprenal reductase that mediates the reduction of polyprenal into dolichal in a NADP-dependent mechanism. Dolichols are required for the synthesis of dolichol-linked monosaccharides and the oligosaccharide precursor used for N-glycosylation. In Oryza sativa subsp. indica (Rice), this protein is Polyprenal reductase 2.